We begin with the raw amino-acid sequence, 191 residues long: Small ribosomal subunit protein eS7 (191 aa).

The protein belongs to the eukaryotic ribosomal protein eS7 family.

The polypeptide is Small ribosomal subunit protein eS7 (RPS7) (Hordeum vulgare (Barley)).